Here is a 615-residue protein sequence, read N- to C-terminus: MARVLGVLLCLLALFSSSLCLDHANGRGDQALAQINVYETSLALDSSVKLHASPQVLGSQGEDTEWVNLAISNPKPTSDDWIGVFSPAKFDSGNCWPTSGGKEKTPYICSSPIKYMYCNSHPDYMKSGNVTLKFQIINQRADVSFALFSNGVQEPHLLGVSNPVAFFNPKAPVYPRLALGKNWDEMTVTWTSGYNIDEAVPFIEWSAKGLPARRSPAGTLTFNRNSMCGNPARGVGWRDPGFFHTSFLKELWPNREYIYRLGHDLVNGSTIWSKNYTFVSSPYPGQDSKQRVIIFGDMGKGERDGSNEYNDYQPGSLNTTDQVIKDLKDIDIVFHIGDLTYSNGYLSQWDQFTAQVQPIASTVPYMIASGNHERDWPDTGSFYAGTDSGGECGVPAETMFYFPAENRAKFWYKTDYGMFRFCVADSEHDWREGTEQYKFIENCLATVDRKTQPWLIFIAHRVLGYSTNDWYGKEGTFEEPMGRESLQKLWQKYKVDLAFYGHVHNYERTCPIYESQCVNNDKDHYSGTFKGTIHVVVGGAGSHLSPFSSLVPKWSLVRDYDFGFVKLTASDHSSLLFEYKKSSTGQVYDSFNISRDYRDVLACTHDSCEPTTSAG.

An N-terminal signal peptide occupies residues 1–26 (MARVLGVLLCLLALFSSSLCLDHANG). Asn-129, Asn-267, and Asn-275 each carry an N-linked (GlcNAc...) asparagine glycan. Asp-297 lines the Fe cation pocket. N-linked (GlcNAc...) asparagine glycosylation is present at Asn-318. Positions 338 and 341 each coordinate Fe cation. Residue Asp-338 participates in Zn(2+) binding. The Zn(2+) site is built by Asn-371, His-460, and His-502. Asn-371 lines the substrate pocket. A substrate-binding site is contributed by 502–504 (HVH). His-504 contacts Fe cation. Asn-592 is a glycosylation site (N-linked (GlcNAc...) asparagine).

This sequence belongs to the metallophosphoesterase superfamily. Purple acid phosphatase family. As to quaternary structure, homodimer. Fe cation is required as a cofactor. The cofactor is Zn(2+). As to expression, specifically expressed in flowers.

It localises to the secreted. This Arabidopsis thaliana (Mouse-ear cress) protein is Probable inactive purple acid phosphatase 24 (PAP24).